Here is an 85-residue protein sequence, read N- to C-terminus: Large ribosomal subunit protein bL27 (85 aa).

Positions 1-22 (MAHKKAGGSTNNGRDSESKRLG) are disordered.

It belongs to the bacterial ribosomal protein bL27 family.

This chain is Large ribosomal subunit protein bL27, found in Photobacterium profundum (strain SS9).